We begin with the raw amino-acid sequence, 316 residues long: Aspartate carbamoyltransferase catalytic subunit (316 aa).

The carbamoyl phosphate site is built by Arg-66 and Thr-67. Lys-94 is a binding site for L-aspartate. Carbamoyl phosphate contacts are provided by Arg-116, His-146, and Gln-149. Residues Arg-180 and Arg-235 each contribute to the L-aspartate site. Carbamoyl phosphate-binding residues include Gly-276 and Pro-277.

The protein belongs to the aspartate/ornithine carbamoyltransferase superfamily. ATCase family. In terms of assembly, heterododecamer (2C3:3R2) of six catalytic PyrB chains organized as two trimers (C3), and six regulatory PyrI chains organized as three dimers (R2).

It carries out the reaction carbamoyl phosphate + L-aspartate = N-carbamoyl-L-aspartate + phosphate + H(+). It functions in the pathway pyrimidine metabolism; UMP biosynthesis via de novo pathway; (S)-dihydroorotate from bicarbonate: step 2/3. Functionally, catalyzes the condensation of carbamoyl phosphate and aspartate to form carbamoyl aspartate and inorganic phosphate, the committed step in the de novo pyrimidine nucleotide biosynthesis pathway. This Stenotrophomonas maltophilia (strain R551-3) protein is Aspartate carbamoyltransferase catalytic subunit.